Here is a 252-residue protein sequence, read N- to C-terminus: UPF0736 protein OB1207 (252 aa).

Belongs to the UPF0736 family.

This Oceanobacillus iheyensis (strain DSM 14371 / CIP 107618 / JCM 11309 / KCTC 3954 / HTE831) protein is UPF0736 protein OB1207.